A 99-amino-acid chain; its full sequence is Biogenesis of lysosome-related organelles complex 1 subunit SNN1 (99 aa).

A coiled-coil region spans residues 34–94; sequence SINELRESQA…VVLKRYEKMV (61 aa).

Belongs to the SNAPIN family. In terms of assembly, component of the biogenesis of lysosome-related organelles complex-1 (BLOC-1).

It localises to the endosome. Functionally, component of the biogenesis of lysosome-related organelles complex-1 (BLOC-1), a complex involved in endosomal cargo sorting. This is Biogenesis of lysosome-related organelles complex 1 subunit SNN1 (SNN1) from Kluyveromyces lactis (strain ATCC 8585 / CBS 2359 / DSM 70799 / NBRC 1267 / NRRL Y-1140 / WM37) (Yeast).